The primary structure comprises 369 residues: Anhydro-N-acetylmuramic acid kinase (369 aa).

Residue 12–19 participates in ATP binding; sequence GTSLDGVD.

The protein belongs to the anhydro-N-acetylmuramic acid kinase family.

It catalyses the reaction 1,6-anhydro-N-acetyl-beta-muramate + ATP + H2O = N-acetyl-D-muramate 6-phosphate + ADP + H(+). It participates in amino-sugar metabolism; 1,6-anhydro-N-acetylmuramate degradation. The protein operates within cell wall biogenesis; peptidoglycan recycling. Catalyzes the specific phosphorylation of 1,6-anhydro-N-acetylmuramic acid (anhMurNAc) with the simultaneous cleavage of the 1,6-anhydro ring, generating MurNAc-6-P. Is required for the utilization of anhMurNAc either imported from the medium or derived from its own cell wall murein, and thus plays a role in cell wall recycling. In Escherichia coli O139:H28 (strain E24377A / ETEC), this protein is Anhydro-N-acetylmuramic acid kinase.